We begin with the raw amino-acid sequence, 553 residues long: Protein TIC 55, chloroplastic (553 aa).

A chloroplast-targeting transit peptide spans 1 to 60 (MALALASANSFLLPTKTHFALHVSPPPSKKTLLCTNPSSNFSFNKALSSRRRKQAWCVAA). The Stromal segment spans residues 61-492 (AADVKDATLL…GCSSAIKAFQ (432 aa)). The Rieske domain maps to 103-208 (WYPLYLTKNV…VRDSQGVLWV (106 aa)). 4 residues coordinate [2Fe-2S] cluster: Cys144, His146, Cys163, and His166. Residues His257 and His262 each coordinate Fe cation. Residues 493-513 (IWKNVLSGVVVALAALAILVS) form a helical membrane-spanning segment. Residues 514–518 (GRQWK) lie on the Chloroplast intermembrane side of the membrane. The chain crosses the membrane as a helical span at residues 519-539 (VLLLASASLCSVGVYACSTAI). Topologically, residues 540–553 (AMNTTNFIRVHRRL) are stromal.

Part of the Tic complex. Interacts with TIC62 and TIC110. Requires [2Fe-2S] cluster as cofactor.

It localises to the plastid. The protein resides in the chloroplast inner membrane. Functionally, involved in protein precursor import into chloroplasts. Part of the redox regulon consisting of TIC32, TIC 55 and TIC62. This chain is Protein TIC 55, chloroplastic (TIC55), found in Pisum sativum (Garden pea).